Consider the following 254-residue polypeptide: Sensory transduction protein LytR (254 aa).

In terms of domain architecture, Response regulatory spans 2–116; sequence RAIIVDDEPL…RIAQAVHKVE (115 aa). A 4-aspartylphosphate modification is found at Asp53. The interval 120-143 is disordered; it reads GQTTEHHSDSYTTASMDTQNNEKT. Residues 129–138 are compositionally biased toward polar residues; that stretch reads SYTTASMDTQ. The 105-residue stretch at 149–253 folds into the HTH LytTR-type domain; the sequence is LPIEVNERIH…MKTFKQMMGL (105 aa).

Post-translationally, phosphorylated by LytS.

Its subcellular location is the cytoplasm. Member of the two-component regulatory system LytR/LytS that probably regulates genes involved in cell wall metabolism. In Staphylococcus saprophyticus subsp. saprophyticus (strain ATCC 15305 / DSM 20229 / NCIMB 8711 / NCTC 7292 / S-41), this protein is Sensory transduction protein LytR (lytR).